The following is a 567-amino-acid chain: Microtubule-associated protein 70-1 (567 aa).

The stretch at 38 to 341 (VRVELTRLEN…AARSEAQLKD (304 aa)) forms a coiled coil. The segment at 220–440 (ILDRMHRQKV…SGMNVSTDSS (221 aa)) is required for targeting to microtubules. Disordered stretches follow at residues 425 to 457 (KGHV…EFTS) and 534 to 567 (LEKE…ARNM). Basic and acidic residues predominate over residues 440 to 453 (SEDKESNNSDEKAN). Residues 516 to 545 (KKRRMEVAAMEKEMAALRLEKEQDNKAKRF) adopt a coiled-coil conformation.

It belongs to the MAP70 family.

It localises to the cytoplasm. It is found in the cytoskeleton. Plant-specific protein that interact with microtubules. The chain is Microtubule-associated protein 70-1 (MAP70.1) from Oryza sativa subsp. japonica (Rice).